The primary structure comprises 153 residues: 6,7-dimethyl-8-ribityllumazine synthase (153 aa).

Residues Phe21, 55–57 (AFE), and 79–81 (CVI) contribute to the 5-amino-6-(D-ribitylamino)uracil site. Residue 84 to 85 (AT) coordinates (2S)-2-hydroxy-3-oxobutyl phosphate. The active-site Proton donor is His87. A 5-amino-6-(D-ribitylamino)uracil-binding site is contributed by Phe112. Arg126 serves as a coordination point for (2S)-2-hydroxy-3-oxobutyl phosphate.

This sequence belongs to the DMRL synthase family. Forms an icosahedral capsid composed of 60 subunits, arranged as a dodecamer of pentamers.

It carries out the reaction (2S)-2-hydroxy-3-oxobutyl phosphate + 5-amino-6-(D-ribitylamino)uracil = 6,7-dimethyl-8-(1-D-ribityl)lumazine + phosphate + 2 H2O + H(+). It participates in cofactor biosynthesis; riboflavin biosynthesis; riboflavin from 2-hydroxy-3-oxobutyl phosphate and 5-amino-6-(D-ribitylamino)uracil: step 1/2. Functionally, catalyzes the formation of 6,7-dimethyl-8-ribityllumazine by condensation of 5-amino-6-(D-ribitylamino)uracil with 3,4-dihydroxy-2-butanone 4-phosphate. This is the penultimate step in the biosynthesis of riboflavin. The chain is 6,7-dimethyl-8-ribityllumazine synthase from Staphylococcus epidermidis (strain ATCC 35984 / DSM 28319 / BCRC 17069 / CCUG 31568 / BM 3577 / RP62A).